Consider the following 475-residue polypeptide: ATP synthase subunit beta (475 aa).

156–163 (GGAGVGKT) contributes to the ATP binding site.

Belongs to the ATPase alpha/beta chains family. In terms of assembly, F-type ATPases have 2 components, CF(1) - the catalytic core - and CF(0) - the membrane proton channel. CF(1) has five subunits: alpha(3), beta(3), gamma(1), delta(1), epsilon(1). CF(0) has three main subunits: a(1), b(2) and c(9-12). The alpha and beta chains form an alternating ring which encloses part of the gamma chain. CF(1) is attached to CF(0) by a central stalk formed by the gamma and epsilon chains, while a peripheral stalk is formed by the delta and b chains.

The protein localises to the cell membrane. It carries out the reaction ATP + H2O + 4 H(+)(in) = ADP + phosphate + 5 H(+)(out). In terms of biological role, produces ATP from ADP in the presence of a proton gradient across the membrane. The catalytic sites are hosted primarily by the beta subunits. This is ATP synthase subunit beta from Mycoplasma pneumoniae (strain ATCC 29342 / M129 / Subtype 1) (Mycoplasmoides pneumoniae).